Here is a 340-residue protein sequence, read N- to C-terminus: Pesticidal crystal protein Cry15Aa (340 aa).

Residues Arg-318–Glu-340 are disordered.

Promotes colloidosmotic lysis by binding to the midgut epithelial cells of lepidopteran larvae. In Bacillus thuringiensis subsp. thompsoni, this protein is Pesticidal crystal protein Cry15Aa (cry15Aa).